Consider the following 320-residue polypeptide: Cytochrome f (320 aa).

The first 35 residues, 1–35 (MENRKTFSWLKEQMIRSISVSIMIYVITRTSISNA), serve as a signal peptide directing secretion. Residues Tyr-36, Cys-56, Cys-59, and His-60 each contribute to the heme site. Residues 286–305 (VQGLLFFFASVILAQVFLVL) form a helical membrane-spanning segment.

It belongs to the cytochrome f family. The 4 large subunits of the cytochrome b6-f complex are cytochrome b6, subunit IV (17 kDa polypeptide, petD), cytochrome f and the Rieske protein, while the 4 small subunits are PetG, PetL, PetM and PetN. The complex functions as a dimer. It depends on heme as a cofactor.

Its subcellular location is the plastid. The protein resides in the chloroplast thylakoid membrane. Functionally, component of the cytochrome b6-f complex, which mediates electron transfer between photosystem II (PSII) and photosystem I (PSI), cyclic electron flow around PSI, and state transitions. The protein is Cytochrome f (petA) of Zea mays (Maize).